Here is a 297-residue protein sequence, read N- to C-terminus: tRNA dimethylallyltransferase (297 aa).

Residue Gly8–Ser15 coordinates ATP. A substrate-binding site is contributed by Thr10–Ser15. The tract at residues Asp33–Ser36 is interaction with substrate tRNA.

It belongs to the IPP transferase family. Monomer. The cofactor is Mg(2+).

The enzyme catalyses adenosine(37) in tRNA + dimethylallyl diphosphate = N(6)-dimethylallyladenosine(37) in tRNA + diphosphate. Functionally, catalyzes the transfer of a dimethylallyl group onto the adenine at position 37 in tRNAs that read codons beginning with uridine, leading to the formation of N6-(dimethylallyl)adenosine (i(6)A). The polypeptide is tRNA dimethylallyltransferase (Sulfurimonas denitrificans (strain ATCC 33889 / DSM 1251) (Thiomicrospira denitrificans (strain ATCC 33889 / DSM 1251))).